We begin with the raw amino-acid sequence, 297 residues long: Phosphoribosylaminoimidazole-succinocarboxamide synthase (297 aa).

This sequence belongs to the SAICAR synthetase family.

The catalysed reaction is 5-amino-1-(5-phospho-D-ribosyl)imidazole-4-carboxylate + L-aspartate + ATP = (2S)-2-[5-amino-1-(5-phospho-beta-D-ribosyl)imidazole-4-carboxamido]succinate + ADP + phosphate + 2 H(+). It functions in the pathway purine metabolism; IMP biosynthesis via de novo pathway; 5-amino-1-(5-phospho-D-ribosyl)imidazole-4-carboxamide from 5-amino-1-(5-phospho-D-ribosyl)imidazole-4-carboxylate: step 1/2. This Mycobacterium sp. (strain KMS) protein is Phosphoribosylaminoimidazole-succinocarboxamide synthase.